The primary structure comprises 836 residues: MIAELVSSALGLALYLNTLSADFCYDDSRAIKTNQDLLPETPWTHIFYNDFWGTLLTHSGSHKSYRPLCTLSFRLNHAIGGLNPWSYHLVNVLLHAAVTGLFTSFSKILLGDGYWTFMAGLMFASHPIHTEAVAGIVGRADVGASLFFLLSLLCYIKHCSTRGYSARTWGWFLGSGLCAGCSMLWKEQGVTVLAVSAVYDVFVFHRLKIKQILPTIYKRKNLSLFLSISLLIFWGSSLLGARLYWMGNKPPSFSNSDNPAADSDSLLTRTLTFFYLPTKNLWLLLCPDTLSFDWSMDAVPLLKTVCDWRNLHTVAFYTGLLLLAYYGLKSPSVDRECNGKTVTNGKQNANGHSCLSDVEYQNSETKSSFASKVENGIKNDVSQRTQLPSTENIVVLSLSLLIIPFVPATNLFFYVGFVIAERVLYIPSMGFCLLITVGARALYVKVQKRFLKSLIFYATATLIVFYGLKTAIRNGDWQNEEMLYRSGIKVNPAKAWGNLGNVLKSQSKISEAESAYRNALYYRSNMADMLYNLGLLLQENSRFAEALHYYKLAIGSRPTLASAYLNTGIILMNQGRTEEARRTFLKCSEIPDENLKDPHAHKSSVTSCLYNLGKLYHEQGHYEEALSVYKEAIQKMPRQFAPQSLYNMMGEAYMRLSKLPEAEHWYMESLRSKTDHIPAHLTYGKLLALTGRKSEAEKLFLKAIELDPTKGNCYMHYGQFLLEEARLIEAAEMAKKAAELDSTEFDVVFNAAHMLRQASLNEAAEKYYDLAARLRPNYPAALMNLGAILHLNGRLQKAEANYLRALQLKPDDVITQSNLRKLWNIMEKQGLKTSKT.

Residues 1–21 (MIAELVSSALGLALYLNTLSA) traverse the membrane as a helical segment. Over 22–84 (DFCYDDSRAI…LNHAIGGLNP (63 aa)) the chain is Extracellular. The chain crosses the membrane as a helical span at residues 85-105 (WSYHLVNVLLHAAVTGLFTSF). Over 106–107 (SK) the chain is Cytoplasmic. The chain crosses the membrane as a helical span at residues 108 to 128 (ILLGDGYWTFMAGLMFASHPI). At 129-132 (HTEA) the chain is on the extracellular side. The chain crosses the membrane as a helical span at residues 133–153 (VAGIVGRADVGASLFFLLSLL). Over 154–162 (CYIKHCSTR) the chain is Cytoplasmic. Transmembrane regions (helical) follow at residues 163 to 184 (GYSA…CSML) and 185 to 204 (WKEQ…VFVF). Residues 205–220 (HRLKIKQILPTIYKRK) lie on the Cytoplasmic side of the membrane. Residues 221 to 241 (NLSLFLSISLLIFWGSSLLGA) traverse the membrane as a helical segment. Residues 242 to 312 (RLYWMGNKPP…KTVCDWRNLH (71 aa)) lie on the Extracellular side of the membrane. The helical transmembrane segment at 313–333 (TVAFYTGLLLLAYYGLKSPSV) threads the bilayer. The Cytoplasmic portion of the chain corresponds to 334–399 (DRECNGKTVT…TENIVVLSLS (66 aa)). Residues 400-420 (LLIIPFVPATNLFFYVGFVIA) form a helical membrane-spanning segment. Over 421 to 422 (ER) the chain is Extracellular. A helical transmembrane segment spans residues 423 to 443 (VLYIPSMGFCLLITVGARALY). The Cytoplasmic segment spans residues 444-449 (VKVQKR). A helical membrane pass occupies residues 450–470 (FLKSLIFYATATLIVFYGLKT). The Extracellular segment spans residues 471 to 836 (AIRNGDWQNE…EKQGLKTSKT (366 aa)). TPR repeat units follow at residues 493-526 (AKAW…RSNM), 527-560 (ADML…RPTL), 561-594 (ASAY…PDEN), 606-639 (TSCL…MPRQ), 643-676 (QSLY…KTDH), 677-710 (IPAH…DPTK), 711-744 (GNCY…DSTE), 745-778 (FDVV…RPNY), and 779-812 (PAAL…KPDD).

It belongs to the TMTC family.

It localises to the membrane. Its subcellular location is the endoplasmic reticulum. It carries out the reaction a di-trans,poly-cis-dolichyl beta-D-mannosyl phosphate + L-seryl-[protein] = 3-O-(alpha-D-mannosyl)-L-seryl-[protein] + a di-trans,poly-cis-dolichyl phosphate + H(+). The enzyme catalyses a di-trans,poly-cis-dolichyl beta-D-mannosyl phosphate + L-threonyl-[protein] = 3-O-(alpha-D-mannosyl)-L-threonyl-[protein] + a di-trans,poly-cis-dolichyl phosphate + H(+). It participates in protein modification; protein glycosylation. Functionally, transfers mannosyl residues to the hydroxyl group of serine or threonine residues. The 4 members of the TMTC family are O-mannosyl-transferases dedicated primarily to the cadherin superfamily, each member seems to have a distinct role in decorating the cadherin domains with O-linked mannose glycans at specific regions. Also acts as O-mannosyl-transferase on other proteins such as PDIA3. The sequence is that of Protein O-mannosyl-transferase TMTC2 from Homo sapiens (Human).